Reading from the N-terminus, the 94-residue chain is Large ribosomal subunit protein eL43B (94 aa).

A C4-type zinc finger spans residues 39–62; that stretch reads CPFCGRLTVKRTAAGIWKCSGKGC.

This sequence belongs to the eukaryotic ribosomal protein eL43 family. As to quaternary structure, component of the large ribosomal subunit (LSU). Mature yeast ribosomes consist of a small (40S) and a large (60S) subunit. The 40S small subunit contains 1 molecule of ribosomal RNA (18S rRNA) and at least 33 different proteins. The large 60S subunit contains 3 rRNA molecules (25S, 5.8S and 5S rRNA) and at least 46 different proteins.

It localises to the cytoplasm. In terms of biological role, component of the ribosome, a large ribonucleoprotein complex responsible for the synthesis of proteins in the cell. The small ribosomal subunit (SSU) binds messenger RNAs (mRNAs) and translates the encoded message by selecting cognate aminoacyl-transfer RNA (tRNA) molecules. The large subunit (LSU) contains the ribosomal catalytic site termed the peptidyl transferase center (PTC), which catalyzes the formation of peptide bonds, thereby polymerizing the amino acids delivered by tRNAs into a polypeptide chain. The nascent polypeptides leave the ribosome through a tunnel in the LSU and interact with protein factors that function in enzymatic processing, targeting, and the membrane insertion of nascent chains at the exit of the ribosomal tunnel. This is Large ribosomal subunit protein eL43B (rpl4302) from Schizosaccharomyces pombe (strain 972 / ATCC 24843) (Fission yeast).